We begin with the raw amino-acid sequence, 152 residues long: Interleukin-1 family member 10 (152 aa).

It belongs to the IL-1 family. Interacts with cargo receptor TMED10; the interaction mediates the translocation from the cytoplasm into the ERGIC (endoplasmic reticulum-Golgi intermediate compartment) and thereby secretion. Expressed in fetal skin, spleen and tonsil. Expressed mostly in the basal epithelia of skin and in proliferating B-cells of the tonsil.

It localises to the cytoplasm. The protein resides in the secreted. In terms of biological role, cytokine with immunomodulatory activity. Alone, does not induce cytokine production, but reduces IL22 and IL17A production by T-cells in response to heat-killed Candida albicans. Reduces IL36G-induced production of IL8 by peripheral blood mononuclear cells. Increases IL6 production by dendritic cells stimulated by bacterial lipopolysaccharides (LPS). Ligand for IL-36R/IL1RL2. This is Interleukin-1 family member 10 from Homo sapiens (Human).